We begin with the raw amino-acid sequence, 216 residues long: Peptide methionine sulfoxide reductase MsrA (216 aa).

The active site involves C57.

Belongs to the MsrA Met sulfoxide reductase family.

It carries out the reaction L-methionyl-[protein] + [thioredoxin]-disulfide + H2O = L-methionyl-(S)-S-oxide-[protein] + [thioredoxin]-dithiol. It catalyses the reaction [thioredoxin]-disulfide + L-methionine + H2O = L-methionine (S)-S-oxide + [thioredoxin]-dithiol. Has an important function as a repair enzyme for proteins that have been inactivated by oxidation. Catalyzes the reversible oxidation-reduction of methionine sulfoxide in proteins to methionine. The protein is Peptide methionine sulfoxide reductase MsrA of Agrobacterium fabrum (strain C58 / ATCC 33970) (Agrobacterium tumefaciens (strain C58)).